Here is a 237-residue protein sequence, read N- to C-terminus: ATP-dependent dethiobiotin synthetase BioD (237 aa).

21–26 (GVGKTV) contacts ATP. A Mg(2+)-binding site is contributed by Thr25. Lys48 is an active-site residue. Residue Thr52 participates in substrate binding. Residues Asp56, 117-120 (EALG), 177-178 (SC), and 209-211 (PYL) each bind ATP. Residues Asp56 and Glu117 each coordinate Mg(2+).

This sequence belongs to the dethiobiotin synthetase family. Homodimer. It depends on Mg(2+) as a cofactor.

It localises to the cytoplasm. It catalyses the reaction (7R,8S)-7,8-diammoniononanoate + CO2 + ATP = (4R,5S)-dethiobiotin + ADP + phosphate + 3 H(+). The catalysed reaction is (7R,8S)-8-amino-7-(carboxyamino)nonanoate + ATP = (4R,5S)-dethiobiotin + ADP + phosphate + H(+). Its pathway is cofactor biosynthesis; biotin biosynthesis; biotin from 7,8-diaminononanoate: step 1/2. In terms of biological role, catalyzes a mechanistically unusual reaction, the ATP-dependent insertion of CO2 between the N7 and N8 nitrogen atoms of 7,8-diaminopelargonic acid (DAPA, also called 7,8-diammoniononanoate) to form a ureido ring. This cyanobacterium does not encode bioA (which catalyzes the formation of the precursor for this reaction in the cannonical pathway), instead it encodes bioU, which replaces bioA and also performs the first half of the cannonical BioD reaction. Thus in this bacteria BioD has a different substrate. In Synechocystis replacement of bioU by bioA from E.coli leads to biotin synthesis, showing BioD can use the 'cannonical' 7,8-diammoniononanoate as a substrate. The polypeptide is ATP-dependent dethiobiotin synthetase BioD (Synechocystis sp. (strain ATCC 27184 / PCC 6803 / Kazusa)).